The sequence spans 303 residues: Aspartate carbamoyltransferase catalytic subunit (303 aa).

Carbamoyl phosphate is bound by residues Arg-51 and Thr-52. Residue Lys-80 coordinates L-aspartate. Carbamoyl phosphate-binding residues include Arg-101, His-129, and Gln-132. L-aspartate is bound by residues Arg-162 and Arg-221. Carbamoyl phosphate is bound by residues Leu-260 and Pro-261.

The protein belongs to the aspartate/ornithine carbamoyltransferase superfamily. ATCase family. As to quaternary structure, heterooligomer of catalytic and regulatory chains.

It catalyses the reaction carbamoyl phosphate + L-aspartate = N-carbamoyl-L-aspartate + phosphate + H(+). The protein operates within pyrimidine metabolism; UMP biosynthesis via de novo pathway; (S)-dihydroorotate from bicarbonate: step 2/3. Its function is as follows. Catalyzes the condensation of carbamoyl phosphate and aspartate to form carbamoyl aspartate and inorganic phosphate, the committed step in the de novo pyrimidine nucleotide biosynthesis pathway. The chain is Aspartate carbamoyltransferase catalytic subunit from Saccharolobus islandicus (strain Y.N.15.51 / Yellowstone #2) (Sulfolobus islandicus).